A 390-amino-acid chain; its full sequence is Na(+)/H(+) antiporter NhaA (390 aa).

12 helical membrane passes run A14–N34, M61–V81, S97–F117, A126–L146, V156–F176, L181–L201, V221–L241, A256–V276, G280–I300, G305–V325, I330–L350, and W362–L382.

The protein belongs to the NhaA Na(+)/H(+) (TC 2.A.33) antiporter family.

It is found in the cell inner membrane. It carries out the reaction Na(+)(in) + 2 H(+)(out) = Na(+)(out) + 2 H(+)(in). Functionally, na(+)/H(+) antiporter that extrudes sodium in exchange for external protons. In Cronobacter sakazakii (strain ATCC BAA-894) (Enterobacter sakazakii), this protein is Na(+)/H(+) antiporter NhaA.